The chain runs to 201 residues: MCALDRRERPLNSQSVNKYILNVQNIYRNSPVPVCVRNKNRKILYANGAFIELFSREDKPLSGESYIRLQVEIFLSSLELECQALGHGSAFCRRFNFHGEIYQIRMENVSFYNDESVVLWQINPFPDYPFFALNQSGSNTNTSDKLTIWNDLSPGTLVVFSFYMLGVGHATIARELGITDRASEDRIKPVKRKIKEFFEHV.

It localises to the cytoplasm. This protein is essential for positively regulating the expression of transfer genes that are involved in the conjugal transfer of DNA between bacterial cells. The polypeptide is Protein TraJ (traJ) (Escherichia coli).